Here is a 607-residue protein sequence, read N- to C-terminus: tRNA uridine 5-carboxymethylaminomethyl modification enzyme MnmG (607 aa).

FAD is bound by residues 11 to 16 (GGGHAG), Val123, and Ser178. 270–284 (GPRYCPSVEDKIVRF) is an NAD(+) binding site. Gln367 contacts FAD.

It belongs to the MnmG family. Homodimer. Heterotetramer of two MnmE and two MnmG subunits. FAD serves as cofactor.

It localises to the cytoplasm. In terms of biological role, NAD-binding protein involved in the addition of a carboxymethylaminomethyl (cmnm) group at the wobble position (U34) of certain tRNAs, forming tRNA-cmnm(5)s(2)U34. This Metamycoplasma arthritidis (strain 158L3-1) (Mycoplasma arthritidis) protein is tRNA uridine 5-carboxymethylaminomethyl modification enzyme MnmG.